Reading from the N-terminus, the 195-residue chain is NADH-quinone oxidoreductase subunit C (195 aa).

Belongs to the complex I 30 kDa subunit family. NDH-1 is composed of 14 different subunits. Subunits NuoB, C, D, E, F, and G constitute the peripheral sector of the complex.

It is found in the cell inner membrane. The enzyme catalyses a quinone + NADH + 5 H(+)(in) = a quinol + NAD(+) + 4 H(+)(out). Its function is as follows. NDH-1 shuttles electrons from NADH, via FMN and iron-sulfur (Fe-S) centers, to quinones in the respiratory chain. The immediate electron acceptor for the enzyme in this species is believed to be ubiquinone. Couples the redox reaction to proton translocation (for every two electrons transferred, four hydrogen ions are translocated across the cytoplasmic membrane), and thus conserves the redox energy in a proton gradient. The chain is NADH-quinone oxidoreductase subunit C from Laribacter hongkongensis (strain HLHK9).